The following is a 309-amino-acid chain: Putative rhizopine-binding protein (309 aa).

An N-terminal signal peptide occupies residues 1–20; the sequence is MKKFIIGIAAAVLVSTAAHA.

This sequence belongs to the bacterial solute-binding protein 2 family.

It is found in the periplasm. Its function is as follows. Involved in rhizopine (L-3-O-methyl-scyllo-inosamine) catabolism. Could be involved in its high affinity transport. This is Putative rhizopine-binding protein (mocB) from Rhizobium meliloti (Ensifer meliloti).